The following is a 175-amino-acid chain: Probable DNA replication complex GINS protein PSF2 (175 aa).

The protein belongs to the GINS2/PSF2 family. As to quaternary structure, component of the GINS complex which is a heterotetramer of SLD5, PSF1, PSF2 and PSF3.

The protein resides in the nucleus. The GINS complex plays an essential role in the initiation of DNA replication. The polypeptide is Probable DNA replication complex GINS protein PSF2 (Encephalitozoon cuniculi (strain GB-M1) (Microsporidian parasite)).